The sequence spans 564 residues: Septation ring formation regulator EzrA (564 aa).

At 1-4 (MVLY) the chain is on the extracellular side. The chain crosses the membrane as a helical span at residues 5-23 (IILAIIVIILIAVGVLFYL). Residues 24–564 (RSNKRQIIEK…KHIEEEVIKQ (541 aa)) are Cytoplasmic-facing. Coiled coils occupy residues 99–138 (SFNA…YKDN), 190–223 (DGNY…LIRE), 271–300 (LISR…LIEH), 350–435 (VRQF…RRLL), and 471–550 (VKQL…ESVE).

This sequence belongs to the EzrA family.

The protein localises to the cell membrane. Its function is as follows. Negative regulator of FtsZ ring formation; modulates the frequency and position of FtsZ ring formation. Inhibits FtsZ ring formation at polar sites. Interacts either with FtsZ or with one of its binding partners to promote depolymerization. The sequence is that of Septation ring formation regulator EzrA from Staphylococcus aureus (strain Mu3 / ATCC 700698).